We begin with the raw amino-acid sequence, 268 residues long: Phosphatidylglycerol--prolipoprotein diacylglyceryl transferase (268 aa).

Transmembrane regions (helical) follow at residues 27–47 (PALRWYGFTYLVGFVAAMWLL), 66–86 (LLFYGFLGVILGGRIGYVLFY), 104–124 (GGMSFHGGLMGVITAMIYIAW), 130–150 (FFAVADMVAPVVPIGLGAGRI), 181–201 (PSQLYQFALEGVALFLLLYWF), 208–228 (VGAVSGMFLLGYGIFRVIVET), and 242–262 (FMTMGQILSVPMILFGLYLIL). Residue Arg-149 participates in a 1,2-diacyl-sn-glycero-3-phospho-(1'-sn-glycerol) binding.

The protein belongs to the Lgt family.

It is found in the cell inner membrane. It carries out the reaction L-cysteinyl-[prolipoprotein] + a 1,2-diacyl-sn-glycero-3-phospho-(1'-sn-glycerol) = an S-1,2-diacyl-sn-glyceryl-L-cysteinyl-[prolipoprotein] + sn-glycerol 1-phosphate + H(+). Its pathway is protein modification; lipoprotein biosynthesis (diacylglyceryl transfer). In terms of biological role, catalyzes the transfer of the diacylglyceryl group from phosphatidylglycerol to the sulfhydryl group of the N-terminal cysteine of a prolipoprotein, the first step in the formation of mature lipoproteins. The polypeptide is Phosphatidylglycerol--prolipoprotein diacylglyceryl transferase (Shewanella sp. (strain ANA-3)).